The following is a 147-amino-acid chain: Basic phospholipase A2 beta-bungarotoxin A2 chain (147 aa).

An N-terminal signal peptide occupies residues Met1 to Ala19. Positions Ala20 to Leu27 are excised as a propeptide. 6 disulfide bridges follow: Cys54–Cys146, Cys56–Cys72, Cys71–Cys127, Cys78–Cys120, Cys88–Cys113, and Cys106–Cys118. Residues Tyr55, Gly57, and Gly59 each coordinate Ca(2+). Residue His75 is part of the active site. Asp76 contacts Ca(2+). Asp121 is a catalytic residue.

It belongs to the phospholipase A2 family. Group I subfamily. D49 sub-subfamily. Heterodimer; disulfide-linked. The A chains have phospholipase A2 activity and the B chains show homology with the basic protease inhibitors. It depends on Ca(2+) as a cofactor. As to expression, expressed by the venom gland.

The protein resides in the secreted. The enzyme catalyses a 1,2-diacyl-sn-glycero-3-phosphocholine + H2O = a 1-acyl-sn-glycero-3-phosphocholine + a fatty acid + H(+). In terms of biological role, snake venom phospholipase A2 (PLA2) that inhibits neuromuscular transmission by blocking acetylcholine release from the nerve termini. PLA2 catalyzes the calcium-dependent hydrolysis of the 2-acyl groups in 3-sn-phosphoglycerides. This Bungarus caeruleus (Indian krait) protein is Basic phospholipase A2 beta-bungarotoxin A2 chain.